The primary structure comprises 264 residues: Acyl-[acyl-carrier-protein]--UDP-N-acetylglucosamine O-acyltransferase (264 aa).

It belongs to the transferase hexapeptide repeat family. LpxA subfamily. Homotrimer.

The protein localises to the cytoplasm. It carries out the reaction a (3R)-hydroxyacyl-[ACP] + UDP-N-acetyl-alpha-D-glucosamine = a UDP-3-O-[(3R)-3-hydroxyacyl]-N-acetyl-alpha-D-glucosamine + holo-[ACP]. Its pathway is glycolipid biosynthesis; lipid IV(A) biosynthesis; lipid IV(A) from (3R)-3-hydroxytetradecanoyl-[acyl-carrier-protein] and UDP-N-acetyl-alpha-D-glucosamine: step 1/6. Involved in the biosynthesis of lipid A, a phosphorylated glycolipid that anchors the lipopolysaccharide to the outer membrane of the cell. This chain is Acyl-[acyl-carrier-protein]--UDP-N-acetylglucosamine O-acyltransferase, found in Glaesserella parasuis serovar 5 (strain SH0165) (Haemophilus parasuis).